The primary structure comprises 235 residues: Large ribosomal subunit protein uL1 (235 aa).

The protein belongs to the universal ribosomal protein uL1 family. Part of the 50S ribosomal subunit.

In terms of biological role, binds directly to 23S rRNA. The L1 stalk is quite mobile in the ribosome, and is involved in E site tRNA release. Its function is as follows. Protein L1 is also a translational repressor protein, it controls the translation of the L11 operon by binding to its mRNA. This chain is Large ribosomal subunit protein uL1, found in Rhodospirillum centenum (strain ATCC 51521 / SW).